The following is a 201-amino-acid chain: Peptide deformylase (201 aa).

Cysteine 92 and histidine 134 together coordinate Fe cation. Residue glutamate 135 is part of the active site. Histidine 138 contributes to the Fe cation binding site.

It belongs to the polypeptide deformylase family. Requires Fe(2+) as cofactor.

The enzyme catalyses N-terminal N-formyl-L-methionyl-[peptide] + H2O = N-terminal L-methionyl-[peptide] + formate. Its function is as follows. Removes the formyl group from the N-terminal Met of newly synthesized proteins. Requires at least a dipeptide for an efficient rate of reaction. N-terminal L-methionine is a prerequisite for activity but the enzyme has broad specificity at other positions. The chain is Peptide deformylase from Rhodopirellula baltica (strain DSM 10527 / NCIMB 13988 / SH1).